The primary structure comprises 149 residues: MNKGQRHIKIREIIMSNDIETQDELVDRLREAGFNVTQATVSRDIKEMQLVKVPMANGRYKYSLPSDQRFNPLQKLKRALVDVFIKLDGTGNLLVLRTLPGNAHAIGVLLDNLDWDEIVGTICGDDTCLIICRTPKDAKKVSNQLLSML.

Belongs to the ArgR family. Homohexamer.

It localises to the cytoplasm. Its pathway is amino-acid biosynthesis; L-arginine biosynthesis [regulation]. Functionally, regulates arginine biosynthesis genes. The protein is Arginine repressor (argR) of Geobacillus stearothermophilus (Bacillus stearothermophilus).